The sequence spans 700 residues: Kin of IRRE-like protein 2 (700 aa).

The signal sequence occupies residues 1–19 (MLASALLVFLCCFKGHAGS). Residues 20 to 507 (SPHFLQQPED…GRRDLLPTVR (488 aa)) are Extracellular-facing. 5 consecutive Ig-like C2-type domains span residues 21 to 115 (PHFL…AQLH), 120 to 219 (PEAP…VTLS), 224 to 304 (PMVT…TALE), 309 to 391 (PILQ…ARLT), and 395 to 497 (PPVV…QIHL). C42 and C100 are oxidised to a cystine. N140 is a glycosylation site (N-linked (GlcNAc...) asparagine). 2 cysteine pairs are disulfide-bonded: C143/C201 and C245/C288. Residues 146-148 (RGD) carry the Cell attachment site motif. N-linked (GlcNAc...) asparagine glycosylation occurs at N298. 2 cysteine pairs are disulfide-bonded: C330–C372 and C416–C482. N-linked (GlcNAc...) asparagine glycosylation is present at N481. Residues 508–528 (IVAGAASAATSLLMVITGVVL) traverse the membrane as a helical segment. Topologically, residues 529-700 (CCWRHGSLSK…PSHQRLQTHV (172 aa)) are cytoplasmic. The segment at 542 to 576 (LVRIPGSSEGSSSRGPEEETGSSEDRGPIVHTDHS) is disordered. Position 563 is a phosphoserine (S563). A compositionally biased stretch (basic and acidic residues) spans 564 to 576 (SEDRGPIVHTDHS). Y595, Y596, and Y653 each carry phosphotyrosine. The disordered stretch occupies residues 671–700 (FGPPELSSGTPPFPYATLSPPSHQRLQTHV). Over residues 689–700 (SPPSHQRLQTHV) the composition is skewed to polar residues.

It belongs to the immunoglobulin superfamily. As to quaternary structure, homodimer. Interacts with NPHS2/podocin (via the C-terminus). Interacts with NPHS1 (via the Ig-like domains). Interacts with FYN. In terms of processing, N-glycosylated. Post-translationally, phosphorylated at Ser-548 or Ser-549; due to site ambiguity, the exact position of the serine phosphorylation could not be determined. Phosphorylation at residues Tyr-631 and/or Tyr-632. FYN mediates tyrosine phosphorylation in pancreatic beta-cells. The extracellular domain is cleaved leading to the generation of a soluble fragment and a membrane-bound C-terminal fragment, which is further cleaved by gamma-secretase. As to expression, highly expressed in beta-cells of the pancreatic islets. Expression is seen in podocytes of kidney glomeruli, and in the cerebellum and hindbrain at 12.5 dpc, in the spinal cord at 10.5 dpc, and in retina and hypothalamus at 13.5 dpc.

The protein resides in the cell membrane. Its function is as follows. May regulate basal insulin secretion. In Mus musculus (Mouse), this protein is Kin of IRRE-like protein 2 (Kirrel2).